Consider the following 215-residue polypeptide: Probable transaldolase (215 aa).

Lys83 acts as the Schiff-base intermediate with substrate in catalysis.

Belongs to the transaldolase family. Type 3B subfamily.

It localises to the cytoplasm. It carries out the reaction D-sedoheptulose 7-phosphate + D-glyceraldehyde 3-phosphate = D-erythrose 4-phosphate + beta-D-fructose 6-phosphate. It functions in the pathway carbohydrate degradation; pentose phosphate pathway; D-glyceraldehyde 3-phosphate and beta-D-fructose 6-phosphate from D-ribose 5-phosphate and D-xylulose 5-phosphate (non-oxidative stage): step 2/3. Transaldolase is important for the balance of metabolites in the pentose-phosphate pathway. The sequence is that of Probable transaldolase from Methanococcus maripaludis (strain C5 / ATCC BAA-1333).